We begin with the raw amino-acid sequence, 146 residues long: Hemoglobin subunit beta (146 aa).

In terms of domain architecture, Globin spans 2–146; the sequence is HWTAEEKQLI…VAHALARKYH (145 aa). 2 residues coordinate heme b: His-63 and His-92.

The protein belongs to the globin family. In terms of assembly, heterotetramer of two alpha chains and two beta chains. Red blood cells.

Its function is as follows. Involved in oxygen transport from the lung to the various peripheral tissues. The protein is Hemoglobin subunit beta (HBB) of Aegypius monachus (Cinereous vulture).